The chain runs to 263 residues: Isoprenyl transferase (263 aa).

The active site involves aspartate 38. Aspartate 38 provides a ligand contact to Mg(2+). Residues 39-42, histidine 55, and 83-85 each bind substrate; these read GNRR and STD. Residue asparagine 86 is the Proton acceptor of the active site. Substrate is bound by residues phenylalanine 87, arginine 89, arginine 212, and 218-220; that span reads RLS. Glutamate 231 contacts Mg(2+).

The protein belongs to the UPP synthase family. In terms of assembly, homodimer. Mg(2+) is required as a cofactor.

Functionally, catalyzes the condensation of isopentenyl diphosphate (IPP) with allylic pyrophosphates generating different type of terpenoids. In Thermus thermophilus (strain ATCC 27634 / DSM 579 / HB8), this protein is Isoprenyl transferase.